Here is a 468-residue protein sequence, read N- to C-terminus: 3-isopropylmalate dehydratase large subunit (468 aa).

[4Fe-4S] cluster contacts are provided by cysteine 345, cysteine 405, and cysteine 408.

Belongs to the aconitase/IPM isomerase family. LeuC type 1 subfamily. In terms of assembly, heterodimer of LeuC and LeuD. [4Fe-4S] cluster serves as cofactor.

It catalyses the reaction (2R,3S)-3-isopropylmalate = (2S)-2-isopropylmalate. The protein operates within amino-acid biosynthesis; L-leucine biosynthesis; L-leucine from 3-methyl-2-oxobutanoate: step 2/4. Functionally, catalyzes the isomerization between 2-isopropylmalate and 3-isopropylmalate, via the formation of 2-isopropylmaleate. This Oceanobacillus iheyensis (strain DSM 14371 / CIP 107618 / JCM 11309 / KCTC 3954 / HTE831) protein is 3-isopropylmalate dehydratase large subunit.